An 89-amino-acid polypeptide reads, in one-letter code: Large ribosomal subunit protein bL28 (89 aa).

Belongs to the bacterial ribosomal protein bL28 family.

This Chlamydia abortus (strain DSM 27085 / S26/3) (Chlamydophila abortus) protein is Large ribosomal subunit protein bL28.